A 504-amino-acid chain; its full sequence is Probable cytosol aminopeptidase (504 aa).

Residues Lys-276 and Asp-281 each contribute to the Mn(2+) site. The active site involves Lys-288. Mn(2+)-binding residues include Asp-299, Asp-358, and Glu-360. Arg-362 is an active-site residue.

It belongs to the peptidase M17 family. It depends on Mn(2+) as a cofactor.

It localises to the cytoplasm. It carries out the reaction Release of an N-terminal amino acid, Xaa-|-Yaa-, in which Xaa is preferably Leu, but may be other amino acids including Pro although not Arg or Lys, and Yaa may be Pro. Amino acid amides and methyl esters are also readily hydrolyzed, but rates on arylamides are exceedingly low.. The catalysed reaction is Release of an N-terminal amino acid, preferentially leucine, but not glutamic or aspartic acids.. Functionally, presumably involved in the processing and regular turnover of intracellular proteins. Catalyzes the removal of unsubstituted N-terminal amino acids from various peptides. The polypeptide is Probable cytosol aminopeptidase (Bordetella avium (strain 197N)).